A 462-amino-acid chain; its full sequence is MQKVILVGKPNVGKSSLFNRLARRRIAITSDVSGTTRDTNKAKIEVEGKECILIDSGGLDDSSELFKNVKAKTLAEAKNSDVILYMVDGKMMPDDEDRAIFYELSKLNLPIALVINKIDSKKDEQREWEFVNFGSKNSFGISVSHNTGVDELSIWLAKHLEEKVQIKADTSDDFDDFLENYNDEGELSDEIDYESKNIRVGIIGRVNVGKSSLLNALVKESRAVVSDVAGTTIDPVNEIYEHDGRVFEFVDTAGIRKRGKIEGIERYALNRTEKILEETDVALLVLDSSEPLTELDERIAGIASKFELGVIIVLNKWDKSSEEFDELCKEIKDRFKFLSYAPIISVSALGGKRVHKIYPLIVEIYKNYTQKIQTSKLNEVIGEATKAHPLPRDKGRVVKIYYAVQFKTAPIMIALIMNRPKCLHFSYKRYLTNKLRESFSLTGVPIVLIPKKRGESDEDKEQ.

2 EngA-type G domains span residues 2–164 (QKVI…EEKV) and 198–369 (IRVG…KNYT). GTP-binding positions include 8–15 (GKPNVGKS), 55–59 (DSGGL), 116–119 (NKID), 204–211 (GRVNVGKS), 251–255 (DTAGI), and 315–318 (NKWD). The KH-like domain occupies 370 to 454 (QKIQTSKLNE…PIVLIPKKRG (85 aa)).

Belongs to the TRAFAC class TrmE-Era-EngA-EngB-Septin-like GTPase superfamily. EngA (Der) GTPase family. In terms of assembly, associates with the 50S ribosomal subunit.

GTPase that plays an essential role in the late steps of ribosome biogenesis. The chain is GTPase Der from Campylobacter concisus (strain 13826).